The primary structure comprises 246 residues: V-type proton ATPase subunit D 1 (246 aa).

This sequence belongs to the V-ATPase D subunit family. As to quaternary structure, V-ATPase is a heteromultimeric enzyme made up of two complexes: the ATP-hydrolytic V1 complex and the proton translocation V0 complex. The V1 complex consists of three catalytic AB heterodimers that form a heterohexamer, three peripheral stalks each consisting of EG heterodimers, one central rotor including subunits D and F, and the regulatory subunits C and H. The proton translocation complex V0 consists of the proton transport subunit a, a ring of proteolipid subunits c9c'', rotary subunit d, subunits e and f, and the accessory subunits VhaAC45 and ATP6AP2.

Its function is as follows. Subunit of the V1 complex of vacuolar(H+)-ATPase (V-ATPase), a multisubunit enzyme composed of a peripheral complex (V1) that hydrolyzes ATP and a membrane integral complex (V0) that translocates protons. V-ATPase is responsible for acidifying and maintaining the pH of intracellular compartments and in some cell types, is targeted to the plasma membrane, where it is responsible for acidifying the extracellular environment. The polypeptide is V-type proton ATPase subunit D 1 (Vha36-1) (Drosophila melanogaster (Fruit fly)).